The following is a 274-amino-acid chain: Thiazole synthase (274 aa).

The Schiff-base intermediate with DXP role is filled by lysine 111. Residues glycine 172, 198 to 199 (AG), and 220 to 221 (NT) contribute to the 1-deoxy-D-xylulose 5-phosphate site.

Belongs to the ThiG family. In terms of assembly, homotetramer. Forms heterodimers with either ThiH or ThiS.

It is found in the cytoplasm. The enzyme catalyses [ThiS sulfur-carrier protein]-C-terminal-Gly-aminoethanethioate + 2-iminoacetate + 1-deoxy-D-xylulose 5-phosphate = [ThiS sulfur-carrier protein]-C-terminal Gly-Gly + 2-[(2R,5Z)-2-carboxy-4-methylthiazol-5(2H)-ylidene]ethyl phosphate + 2 H2O + H(+). The protein operates within cofactor biosynthesis; thiamine diphosphate biosynthesis. Catalyzes the rearrangement of 1-deoxy-D-xylulose 5-phosphate (DXP) to produce the thiazole phosphate moiety of thiamine. Sulfur is provided by the thiocarboxylate moiety of the carrier protein ThiS. In vitro, sulfur can be provided by H(2)S. This is Thiazole synthase from Gloeobacter violaceus (strain ATCC 29082 / PCC 7421).